The sequence spans 166 residues: Protein-export protein SecB (166 aa).

This sequence belongs to the SecB family. As to quaternary structure, homotetramer, a dimer of dimers. One homotetramer interacts with 1 SecA dimer.

It is found in the cytoplasm. In terms of biological role, one of the proteins required for the normal export of preproteins out of the cell cytoplasm. It is a molecular chaperone that binds to a subset of precursor proteins, maintaining them in a translocation-competent state. It also specifically binds to its receptor SecA. The sequence is that of Protein-export protein SecB from Rhizorhabdus wittichii (strain DSM 6014 / CCUG 31198 / JCM 15750 / NBRC 105917 / EY 4224 / RW1) (Sphingomonas wittichii).